A 263-amino-acid chain; its full sequence is Phosphatidylglycerol--prolipoprotein diacylglyceryl transferase (263 aa).

4 helical membrane-spanning segments follow: residues 16–36 (LAVSWYSLSYVVGILFGWFYA), 55–75 (FVTYAIIGIIVGGRLGYILLY), 92–112 (EGGMSFHGGAIGVIIAAYIFC), and 117–137 (LNFLSLTDIIAPVVPIGLFFG). R138 contributes to the a 1,2-diacyl-sn-glycero-3-phospho-(1'-sn-glycerol) binding site. 3 helical membrane-spanning segments follow: residues 172–192 (QLYEAFFEGLVLFCILAYAVF), 201–221 (GLNSGLFLMFYSLFRIIIEIF), and 234–254 (SLTMGQILSMPLLLLGIYLII).

This sequence belongs to the Lgt family.

The protein localises to the cell inner membrane. The catalysed reaction is L-cysteinyl-[prolipoprotein] + a 1,2-diacyl-sn-glycero-3-phospho-(1'-sn-glycerol) = an S-1,2-diacyl-sn-glyceryl-L-cysteinyl-[prolipoprotein] + sn-glycerol 1-phosphate + H(+). The protein operates within protein modification; lipoprotein biosynthesis (diacylglyceryl transfer). Its function is as follows. Catalyzes the transfer of the diacylglyceryl group from phosphatidylglycerol to the sulfhydryl group of the N-terminal cysteine of a prolipoprotein, the first step in the formation of mature lipoproteins. In Rickettsia bellii (strain OSU 85-389), this protein is Phosphatidylglycerol--prolipoprotein diacylglyceryl transferase.